An 847-amino-acid chain; its full sequence is Cancer-associated gene 1 protein homolog (847 aa).

The interval 118 to 161 is disordered; it reads EEKPELQSQVYNDPADASQKPDPLKEESLMESSTSENKDELVHE. A coiled-coil region spans residues 377-567; it reads NVILEKNDIN…AAKREAQACT (191 aa).

The sequence is that of Cancer-associated gene 1 protein homolog (Cage1) from Rattus norvegicus (Rat).